We begin with the raw amino-acid sequence, 114 residues long: Iron-sulfur cluster insertion protein ErpA (114 aa).

Positions 42, 106, and 108 each coordinate iron-sulfur cluster.

This sequence belongs to the HesB/IscA family. In terms of assembly, homodimer. The cofactor is iron-sulfur cluster.

In terms of biological role, required for insertion of 4Fe-4S clusters for at least IspG. This chain is Iron-sulfur cluster insertion protein ErpA, found in Haemophilus ducreyi (strain 35000HP / ATCC 700724).